Reading from the N-terminus, the 351-residue chain is Trans-enoyl reductase grgB (351 aa).

The Enoyl reductase (ER) domain occupies 10-346 (GAESGGYRLA…GKVHAKKLVV (337 aa)). NADP(+)-binding positions include 161-164 (ATAT), 184-187 (SPAN), Tyr-202, 249-250 (LE), and 339-340 (VH).

The protein belongs to the zinc-containing alcohol dehydrogenase family.

It participates in secondary metabolite biosynthesis. Trans-enoyl reductase; part of the gene cluster that mediates the biosynthesis of gregatin A, a fungal polyketide featuring an alkylated furanone core. The PKS grgA synthesizes C11 and C4 polyketide chains in the presence and absence of the trans-enoyl reductase grgB, respectively. The polyketide transferase grgF is then responsible for the fusion of the two carbon chains to produce the furanone skeleton of gregatin A. Next, the cytochrome P450 monooxygenase grgG accepts performs the oxidative cyclization to furnish the gregatin scaffold and leads to the formation of desmethylgregatin A. Finally, the O-methyltransferase grgD methylates the carboxyl group of desmethylgregatin A to provide gregatin A. This is Trans-enoyl reductase grgB from Penicillium sp.